We begin with the raw amino-acid sequence, 555 residues long: Urocanate hydratase (555 aa).

NAD(+)-binding positions include glycine 52–glycine 53, glutamine 130, glycine 176–glycine 178, glutamate 196, arginine 201, asparagine 242–alanine 243, glutamine 263–histidine 267, tyrosine 273–leucine 274, and tyrosine 322. Cysteine 410 is an active-site residue. Glycine 492 contacts NAD(+).

It belongs to the urocanase family. Requires NAD(+) as cofactor.

The protein localises to the cytoplasm. The catalysed reaction is 4-imidazolone-5-propanoate = trans-urocanate + H2O. It participates in amino-acid degradation; L-histidine degradation into L-glutamate; N-formimidoyl-L-glutamate from L-histidine: step 2/3. Catalyzes the conversion of urocanate to 4-imidazolone-5-propionate. The polypeptide is Urocanate hydratase (Shewanella putrefaciens (strain CN-32 / ATCC BAA-453)).